The following is a 97-amino-acid chain: uncharacterized protein (97 aa).

This is an uncharacterized protein from Escherichia coli (strain K12).